Here is a 166-residue protein sequence, read N- to C-terminus: Small ribosomal subunit protein uS5 (166 aa).

Residues 11–74 (LREKLVAINR…EKARANMKRV (64 aa)) enclose the S5 DRBM domain.

The protein belongs to the universal ribosomal protein uS5 family. Part of the 30S ribosomal subunit. Contacts proteins S4 and S8.

With S4 and S12 plays an important role in translational accuracy. Functionally, located at the back of the 30S subunit body where it stabilizes the conformation of the head with respect to the body. This Alkalilimnicola ehrlichii (strain ATCC BAA-1101 / DSM 17681 / MLHE-1) protein is Small ribosomal subunit protein uS5.